The chain runs to 123 residues: Large ribosomal subunit protein uL14 (123 aa).

The protein belongs to the universal ribosomal protein uL14 family. As to quaternary structure, part of the 50S ribosomal subunit. Forms a cluster with proteins L3 and L19. In the 70S ribosome, L14 and L19 interact and together make contacts with the 16S rRNA in bridges B5 and B8.

Binds to 23S rRNA. Forms part of two intersubunit bridges in the 70S ribosome. In Pectobacterium atrosepticum (strain SCRI 1043 / ATCC BAA-672) (Erwinia carotovora subsp. atroseptica), this protein is Large ribosomal subunit protein uL14.